Reading from the N-terminus, the 324-residue chain is ATP-dependent 6-phosphofructokinase (324 aa).

Gly11 provides a ligand contact to ATP. 21–25 is an ADP binding site; the sequence is RAVVR. ATP contacts are provided by residues 72–73 and 102–105; these read RE and GNGS. Position 103 (Asn103) interacts with Mg(2+). 126–128 serves as a coordination point for substrate; that stretch reads TID. Asp128 serves as the catalytic Proton acceptor. Position 155 (Arg155) interacts with ADP. Substrate is bound by residues Arg163 and 170 to 172; that span reads MGR. Residues 186-188, Arg212, and 214-216 contribute to the ADP site; these read GAD and KKF. Residues Glu223, Arg248, and 254-257 each bind substrate; that span reads YIQR.

Belongs to the phosphofructokinase type A (PFKA) family. ATP-dependent PFK group I subfamily. Prokaryotic clade 'B1' sub-subfamily. As to quaternary structure, homotetramer. Mg(2+) serves as cofactor.

Its subcellular location is the cytoplasm. The catalysed reaction is beta-D-fructose 6-phosphate + ATP = beta-D-fructose 1,6-bisphosphate + ADP + H(+). The protein operates within carbohydrate degradation; glycolysis; D-glyceraldehyde 3-phosphate and glycerone phosphate from D-glucose: step 3/4. Its activity is regulated as follows. Allosterically activated by ADP and other diphosphonucleosides, and allosterically inhibited by phosphoenolpyruvate. Its function is as follows. Catalyzes the phosphorylation of D-fructose 6-phosphate to fructose 1,6-bisphosphate by ATP, the first committing step of glycolysis. This chain is ATP-dependent 6-phosphofructokinase, found in Persephonella marina (strain DSM 14350 / EX-H1).